The following is a 357-amino-acid chain: Sulfate/thiosulfate import ATP-binding protein CysA (357 aa).

Positions 3 to 237 (IVIQNVSKSF…PKSPFVYDFL (235 aa)) constitute an ABC transporter domain. 35 to 42 (GPSGSGKT) serves as a coordination point for ATP.

This sequence belongs to the ABC transporter superfamily. Sulfate/tungstate importer (TC 3.A.1.6) family. As to quaternary structure, the complex is composed of two ATP-binding proteins (CysA), two transmembrane proteins (CysT and CysW) and a solute-binding protein (CysP).

The protein resides in the cell membrane. The enzyme catalyses sulfate(out) + ATP + H2O = sulfate(in) + ADP + phosphate + H(+). It catalyses the reaction thiosulfate(out) + ATP + H2O = thiosulfate(in) + ADP + phosphate + H(+). Functionally, part of the ABC transporter complex CysAWTP involved in sulfate/thiosulfate import. Responsible for energy coupling to the transport system. The chain is Sulfate/thiosulfate import ATP-binding protein CysA from Halalkalibacterium halodurans (strain ATCC BAA-125 / DSM 18197 / FERM 7344 / JCM 9153 / C-125) (Bacillus halodurans).